A 279-amino-acid polypeptide reads, in one-letter code: MQYQHDSLDKLKLGQQTQYASNYDHTLLQPVPRHLNRDTLGITHTQPFHFGADIWTAYEISWLNLNGLPQVAIADVAIDFQSENLIESKSFKLYLNSFNQSKFATFEEVQQHLTQDLSNCAKGKVSVKLHPLSKYCHEPIVELAGECIDQQDIEINDYQFNPEILTNCTHDQMVKESLVSHLLKSNCLITNQPDWGTLQIRYEGKQIDREKLLRYIISFRQHNEFHEQCVERIFCDLMQFAKPDKLTVYARYTRRGGLDINPFRSNFEAVPDNQRLARQ.

Residue 86–88 (IES) coordinates substrate. Position 88 to 89 (88 to 89 (SK)) interacts with NADPH. The active-site Thioimide intermediate is Cys187. The active-site Proton donor is Asp194. 226-227 (HE) serves as a coordination point for substrate. 255–256 (RG) lines the NADPH pocket.

It belongs to the GTP cyclohydrolase I family. QueF type 2 subfamily. In terms of assembly, homodimer.

The protein resides in the cytoplasm. It carries out the reaction 7-aminomethyl-7-carbaguanine + 2 NADP(+) = 7-cyano-7-deazaguanine + 2 NADPH + 3 H(+). It functions in the pathway tRNA modification; tRNA-queuosine biosynthesis. Catalyzes the NADPH-dependent reduction of 7-cyano-7-deazaguanine (preQ0) to 7-aminomethyl-7-deazaguanine (preQ1). This is NADPH-dependent 7-cyano-7-deazaguanine reductase from Pasteurella multocida (strain Pm70).